Consider the following 741-residue polypeptide: Zinc metalloproteinase nas-30 (741 aa).

Composition is skewed to low complexity over residues 71–85 and 97–118; these read KPAP…APAP and PAPK…DAPP. The segment at 71-122 is disordered; sequence KPAPAAAGPRSAPAPTNEDYNTDIDVPAPKAKARAAPTPRRAQADAPPVYRQ. The Peptidase M12A domain maps to 324 to 516; that stretch reads KVITGSVYRW…VKQVNRLYCN (193 aa). Intrachain disulfides connect Cys364/Cys515, Cys385/Cys404, Cys519/Cys539, Cys541/Cys550, Cys562/Cys583, and Cys610/Cys630. His412 contacts Zn(2+). Residue Glu413 is part of the active site. The Zn(2+) site is built by His416 and His422. The 12-residue stretch at 539 to 550 folds into the EGF-like domain; that stretch reads CKCPDGLGGKLC. In terms of domain architecture, CUB spans 550 to 648; it reads CGRAAKGTDH…ISDQSEALIL (99 aa). N-linked (GlcNAc...) asparagine glycosylation is present at Asn633.

Zn(2+) serves as cofactor.

In terms of biological role, metalloprotease. This is Zinc metalloproteinase nas-30 from Caenorhabditis elegans.